Reading from the N-terminus, the 317-residue chain is Beta-ketoacyl-[acyl-carrier-protein] synthase III (317 aa).

Catalysis depends on residues C112 and H244. Positions 245–249 are ACP-binding; that stretch reads QANLR. Residue N274 is part of the active site.

Belongs to the thiolase-like superfamily. FabH family. As to quaternary structure, homodimer.

It localises to the cytoplasm. It catalyses the reaction malonyl-[ACP] + acetyl-CoA + H(+) = 3-oxobutanoyl-[ACP] + CO2 + CoA. It functions in the pathway lipid metabolism; fatty acid biosynthesis. Catalyzes the condensation reaction of fatty acid synthesis by the addition to an acyl acceptor of two carbons from malonyl-ACP. Catalyzes the first condensation reaction which initiates fatty acid synthesis and may therefore play a role in governing the total rate of fatty acid production. Possesses both acetoacetyl-ACP synthase and acetyl transacylase activities. Its substrate specificity determines the biosynthesis of branched-chain and/or straight-chain of fatty acids. The protein is Beta-ketoacyl-[acyl-carrier-protein] synthase III of Salmonella paratyphi B (strain ATCC BAA-1250 / SPB7).